Here is a 439-residue protein sequence, read N- to C-terminus: Tol-Pal system protein TolB (439 aa).

The first 22 residues, 1 to 22, serve as a signal peptide directing secretion; sequence MKKPLRWLAALTALLLPLSAFA.

Belongs to the TolB family. In terms of assembly, the Tol-Pal system is composed of five core proteins: the inner membrane proteins TolA, TolQ and TolR, the periplasmic protein TolB and the outer membrane protein Pal. They form a network linking the inner and outer membranes and the peptidoglycan layer.

It localises to the periplasm. Functionally, part of the Tol-Pal system, which plays a role in outer membrane invagination during cell division and is important for maintaining outer membrane integrity. The chain is Tol-Pal system protein TolB from Xanthomonas campestris pv. campestris (strain 8004).